Reading from the N-terminus, the 565-residue chain is Tyrosine-protein phosphatase non-receptor type 5 (565 aa).

Residues 1 to 16 (MNYEGARSERENHAAD) show a composition bias toward basic and acidic residues. Residues 1–80 (MNYEGARSER…KPPPRGAGSH (80 aa)) form a disordered region. Over residues 56 to 75 (MPPPPPPSPPSDPAQKPPPR) the composition is skewed to pro residues. The next 2 membrane-spanning stretches (helical) occupy residues 88–108 (LCLF…FSGY) and 146–166 (LLLV…WHLL). A disordered region spans residues 169–189 (PPEPPTPLPPEDRRQSVSRQP). Ser-245 is modified (phosphoserine; by PKA). Thr-255 carries the post-translational modification Phosphothreonine; by MAPK. Ser-268 bears the Phosphoserine; by MAPK mark. Residues 300-555 (LQAEFFEIPM…QFVHHVMSLY (256 aa)) form the Tyrosine-protein phosphatase domain. Residues Asp-461, 496–502 (CSAGIGR), and Gln-540 each bind substrate. Cys-496 (phosphocysteine intermediate) is an active-site residue.

This sequence belongs to the protein-tyrosine phosphatase family. Non-receptor class subfamily. In terms of processing, phosphorylation at Ser-245 by PKA deactivates PTPN5. Phosphorylation at Thr-255 and Ser-268 by MAPKs stabilizes the phosphatase, dephosphorylation of these sites results in ubiquitin-mediated degradation of the active phosphatase.

The protein resides in the endoplasmic reticulum membrane. The enzyme catalyses O-phospho-L-tyrosyl-[protein] + H2O = L-tyrosyl-[protein] + phosphate. In terms of biological role, may regulate the activity of several effector molecules involved in synaptic plasticity and neuronal cell survival, including MAPKs, Src family kinases and NMDA receptors. In Homo sapiens (Human), this protein is Tyrosine-protein phosphatase non-receptor type 5 (PTPN5).